A 458-amino-acid chain; its full sequence is UDP-N-acetylmuramoylalanine--D-glutamate ligase (458 aa).

124 to 130 (GSDGKTT) contributes to the ATP binding site.

The protein belongs to the MurCDEF family.

The protein localises to the cytoplasm. It carries out the reaction UDP-N-acetyl-alpha-D-muramoyl-L-alanine + D-glutamate + ATP = UDP-N-acetyl-alpha-D-muramoyl-L-alanyl-D-glutamate + ADP + phosphate + H(+). It functions in the pathway cell wall biogenesis; peptidoglycan biosynthesis. Functionally, cell wall formation. Catalyzes the addition of glutamate to the nucleotide precursor UDP-N-acetylmuramoyl-L-alanine (UMA). The sequence is that of UDP-N-acetylmuramoylalanine--D-glutamate ligase from Clostridium botulinum (strain 657 / Type Ba4).